A 665-amino-acid polypeptide reads, in one-letter code: Transketolase 1 (665 aa).

H26 contacts substrate. Thiamine diphosphate-binding positions include H66 and 114–116 (GPL). D155 contacts Mg(2+). The thiamine diphosphate site is built by G156 and N185. Mg(2+)-binding residues include N185 and I187. Positions 261, 358, and 385 each coordinate substrate. Thiamine diphosphate is bound at residue H261. The active-site Proton donor is the E412. Thiamine diphosphate is bound at residue F438. Substrate-binding residues include H462, D470, and R521.

This sequence belongs to the transketolase family. In terms of assembly, homodimer. It depends on Mg(2+) as a cofactor. Requires Ca(2+) as cofactor. Mn(2+) serves as cofactor. The cofactor is Co(2+). Thiamine diphosphate is required as a cofactor.

It carries out the reaction D-sedoheptulose 7-phosphate + D-glyceraldehyde 3-phosphate = aldehydo-D-ribose 5-phosphate + D-xylulose 5-phosphate. In terms of biological role, catalyzes the transfer of a two-carbon ketol group from a ketose donor to an aldose acceptor, via a covalent intermediate with the cofactor thiamine pyrophosphate. This is Transketolase 1 (tkt1) from Vibrio cholerae serotype O1 (strain ATCC 39315 / El Tor Inaba N16961).